Reading from the N-terminus, the 199-residue chain is Single-stranded DNA cytosine deaminase (199 aa).

The short motif at 1–30 is the Bipartite nuclear localization signal element; it reads MDSLLKKQRQFLYQFKNVRWAKGRHETYLC. The interaction with SUPT6H stretch occupies residues 2-26; the sequence is DSLLKKQRQFLYQFKNVRWAKGRHE. The CMP/dCMP-type deaminase domain occupies 23 to 130; the sequence is GRHETYLCYV…KAEPEGLRRL (108 aa). The residue at position 27 (T27) is a Phosphothreonine; by PKA. S38 carries the post-translational modification Phosphoserine; by PKA. Residues 39-42 form an important for interaction with CTNNBL1 region; it reads PTSF. A Zn(2+)-binding site is contributed by H56. The active-site Proton donor is E58. 2 residues coordinate Zn(2+): C87 and C90. A required for interaction with RNF126 region spans residues 88-116; sequence YDCARHVADFLRGYPNLSLRIFTARLYFC. Positions 184 to 199 match the Nuclear export signal motif; the sequence is LYEVDDLRDAFRTLGL.

This sequence belongs to the cytidine and deoxycytidylate deaminase family. Interacts with CTNNBL1; the interaction is important for the immunoglobulin switch activity of AICDA. Interacts (via its NLS) with KPNA1. Interacts with PKA/PRKACA and PRKAR1A/PKR1. Interacts with SUPT6H, TRIM28 and NCL. Directly interacts with MCM3AP; this interaction may favor AICDA recruitment to immunoglobulin variable region genes, hence promoting somatic hypermutations. Zn(2+) serves as cofactor. Ser-38 is the major site whereas Thr-27 is the minor site of phosphorylation. Phosphorylation regulates its class-switch recombination activity. In terms of processing, probably monoubiquitinated on several residues by RNF126. In terms of tissue distribution, expressed in lymph nodes, spleen and thymus.

Its subcellular location is the nucleus. It localises to the cytoplasm. It catalyses the reaction a 2'-deoxycytidine in single-stranded DNA + H2O + H(+) = a 2'-deoxyuridine in single-stranded DNA + NH4(+). In terms of biological role, single-stranded DNA-specific cytidine deaminase. Involved in somatic hypermutation (SHM), gene conversion, and class-switch recombination (CSR) in B-lymphocytes by deaminating C to U during transcription of Ig-variable (V) and Ig-switch (S) region DNA. Required for several crucial steps of B-cell terminal differentiation necessary for efficient antibody responses. May also play a role in the epigenetic regulation of gene expression by participating in DNA demethylation. This Bos taurus (Bovine) protein is Single-stranded DNA cytosine deaminase (AICDA).